The chain runs to 122 residues: Fluoride-specific ion channel FluC (122 aa).

4 helical membrane-spanning segments follow: residues 4–24, 36–56, 65–85, and 100–120; these read ILLIGLGGFFGAILRYLVSGI, LIVNLLGSFIIGFLIYSSLFG, FIITGFCGALTTFSTFSYESF, and ILLNVFGCLGMVYLGRLASMF. Residues Gly72 and Thr75 each contribute to the Na(+) site.

Belongs to the fluoride channel Fluc/FEX (TC 1.A.43) family.

The protein resides in the cell membrane. The catalysed reaction is fluoride(in) = fluoride(out). Its activity is regulated as follows. Na(+) is not transported, but it plays an essential structural role and its presence is essential for fluoride channel function. In terms of biological role, fluoride-specific ion channel. Important for reducing fluoride concentration in the cell, thus reducing its toxicity. This is Fluoride-specific ion channel FluC from Methanococcus maripaludis (strain DSM 14266 / JCM 13030 / NBRC 101832 / S2 / LL).